A 584-amino-acid polypeptide reads, in one-letter code: uncharacterized protein (584 aa).

Disordered stretches follow at residues 123–156 (LSCSSSSPSSSSSSSSSSPRLISTPPIISTPSSP), 209–264 (KIVT…INGG), and 355–479 (STQL…ITPT). 2 stretches are compositionally biased toward low complexity: residues 237–260 (SLSFKSPCSSPSSSSSSTTTPKSS) and 366–376 (SISAATTTTIT). Polar residues-rich tracts occupy residues 377 to 388 (PHNNNSTMTTKT) and 395 to 419 (DTSNLSTPKSTSSTINKAFTTSTTP). Low complexity predominate over residues 425–479 (MSMTPLSSSSSSSTTPSKFINPLPSSSSKTTTTITNSKRLSTLSKPSPITPITPT).

This is an uncharacterized protein from Dictyostelium discoideum (Social amoeba).